The following is a 1116-amino-acid chain: uncharacterized protein (1116 aa).

EF-hand domains lie at 8-43 (EEQT…SGLA), 42-77 (LAPQ…VALA), 166-201 (LSTE…INLL), and 292-327 (LPED…IKLK). EH domains are found at residues 9 to 106 (EQTA…DSSK), 134 to 224 (EMTR…AAST), and 259 to 348 (DLTS…VAPL). Residues aspartate 305, asparagine 307, asparagine 309, lysine 311, and glutamate 316 each coordinate Ca(2+). 7 disordered regions span residues 360–454 (PSVV…NSPT), 703–774 (SVNL…ASTV), 812–890 (TSLS…NTSA), 909–978 (PFAT…SPQI), 1004–1024 (TTTH…ENQY), 1044–1066 (SNEV…DDEL), and 1095–1116 (QAAE…AGHH). Over residues 371 to 381 (NPNPTLAPNPT) the composition is skewed to pro residues. The segment covering 401-416 (FSPTLAPQHTSSNATK) has biased composition (polar residues). Positions 565–707 (KAQTEQVNRE…EDGLKSVNLT (143 aa)) form a coiled coil. The span at 723–749 (SFTSNGITTDKPTLPDTTSSVPTQHNS) shows a compositional bias: polar residues. 2 stretches are compositionally biased toward low complexity: residues 755-774 (NTLR…ASTV) and 812-827 (TSLS…SLDS). Positions 864–890 (SKLTGSARNTAEPVENTSAEPIENTSA) are enriched in polar residues. The span at 957–969 (EIDDDESSSDEEP) shows a compositional bias: acidic residues. Acidic residues-rich tracts occupy residues 1055–1066 (TANESDNDDDEL) and 1104–1116 (NSST…AGHH).

Its subcellular location is the cytoplasm. The protein resides in the cytoskeleton. This is an uncharacterized protein from Schizosaccharomyces pombe (strain 972 / ATCC 24843) (Fission yeast).